The chain runs to 194 residues: Myelin-associated neurite-outgrowth inhibitor (194 aa).

Methionine 1 carries the N-acetylmethionine modification. Residues 1-18 lie on the Cytoplasmic side of the membrane; it reads MNPVYSPGSSGVPYANAK. Serine 6 bears the Phosphoserine mark. The helical transmembrane segment at 19–41 threads the bilayer; it reads GIGYPAGFPVGYAAAPAYSPNMY. Residues 42–141 are Extracellular-facing; that stretch reads PGANPTFQTG…PAPIPPPRGS (100 aa). N-linked (GlcNAc...) asparagine glycosylation occurs at asparagine 45. Residues 142–163 traverse the membrane as a helical segment; it reads GVTMGMVAGTTMAMSAGTLLTA. Over 164-194 the chain is Cytoplasmic; it reads HSPTPVAPHPVTVPTYRAPGTPTYSYVPPQW.

This sequence belongs to the FAM168 family. As to quaternary structure, may form homodimers. May interact with DAZAP2, FAM168A, PRDX6, RBM6, TMTC1 and YPEL2. Interacts with CDC27. Post-translationally, N-glycosylated. In terms of tissue distribution, predominantly expressed in the brain, including olfactory bulb, cortex and cerebellum (at protein level).

It localises to the cytoplasm. The protein localises to the perinuclear region. The protein resides in the cell membrane. Its subcellular location is the cell projection. It is found in the axon. Functionally, inhibitor of neuronal axonal outgrowth. Acts as a negative regulator of CDC42 and STAT3 and a positive regulator of STMN2. Positive regulator of CDC27. In Mus musculus (Mouse), this protein is Myelin-associated neurite-outgrowth inhibitor (Fam168b).